Here is an 82-residue protein sequence, read N- to C-terminus: Protein transport protein SBH1 (82 aa).

The disordered stretch occupies residues 1–36 (MSSPTPPGGQRTLQKRKQGSSQKVAASAPKKNTNSN). Residues 1 to 53 (MSSPTPPGGQRTLQKRKQGSSQKVAASAPKKNTNSNNSILKIYSDEATGLRVD) lie on the Cytoplasmic side of the membrane. Residues 19–36 (GSSQKVAASAPKKNTNSN) are compositionally biased toward polar residues. The chain crosses the membrane as a helical span at residues 54-74 (PLVVLFLAVGFIFSVVALHVI).

This sequence belongs to the SEC61-beta family. In terms of assembly, component of the heterotrimeric Sec61 complex, which is composed of SSH1, SBH1 and SSS1. Presumably three to four Sec61 heterotrimers assemble into an oligomeric ring with a central aqueous pore. In cotranslational ER import, the pore diameter varies from 9-15 A in a ribosome-free resting state to 40-60 A in a functional state when associated with the ribosome. The Sec61 complex is part of a channel-forming translocon complex whose composition seem to change dependent upon different functional states. During post-translational ER import the Sec61 complex associates with the Sec62/63 complex to form the Sec complex. SBH1 interacts OST2, OST4 and WBP1 components of the OT complex.

It localises to the endoplasmic reticulum membrane. Part of the Sec61 complex, which is the major component of a channel-forming translocon complex that mediates protein translocation across the endoplasmic reticulum (ER). The functional states of the translocon complex include co- and post-translational ER import, cotranslational membrane protein integration and retrograde transport of misfolded proteins out of the ER. In the cotranslational pathway, ribosomes synthesizing presecretory proteins are targeted to the translocon by the cytosolic signal recognition particle (SRP) and its ER-localized receptor. The association of the Sec61 complex with the ribosome is mediated by the 28S rRNA of the large ribosomal subunit. SRP-independent post-translational translocation requires the association of additional factors, such as the Sec62/63 complex and KAR2. The polypeptide is Protein transport protein SBH1 (SBH1) (Saccharomyces cerevisiae (strain ATCC 204508 / S288c) (Baker's yeast)).